The following is a 346-amino-acid chain: S-adenosylmethionine:tRNA ribosyltransferase-isomerase (346 aa).

This sequence belongs to the QueA family. Monomer.

It localises to the cytoplasm. It catalyses the reaction 7-aminomethyl-7-carbaguanosine(34) in tRNA + S-adenosyl-L-methionine = epoxyqueuosine(34) in tRNA + adenine + L-methionine + 2 H(+). It participates in tRNA modification; tRNA-queuosine biosynthesis. Transfers and isomerizes the ribose moiety from AdoMet to the 7-aminomethyl group of 7-deazaguanine (preQ1-tRNA) to give epoxyqueuosine (oQ-tRNA). The sequence is that of S-adenosylmethionine:tRNA ribosyltransferase-isomerase from Chloroherpeton thalassium (strain ATCC 35110 / GB-78).